The chain runs to 349 residues: DNA replication and repair protein RecF (349 aa).

30 to 37 (GKNGSGKT) serves as a coordination point for ATP.

It belongs to the RecF family.

It is found in the cytoplasm. Functionally, the RecF protein is involved in DNA metabolism; it is required for DNA replication and normal SOS inducibility. RecF binds preferentially to single-stranded, linear DNA. It also seems to bind ATP. The protein is DNA replication and repair protein RecF of Francisella tularensis subsp. holarctica (strain FTNF002-00 / FTA).